Consider the following 250-residue polypeptide: 5-oxoprolinase subunit A (250 aa).

Belongs to the LamB/PxpA family. Forms a complex composed of PxpA, PxpB and PxpC.

The enzyme catalyses 5-oxo-L-proline + ATP + 2 H2O = L-glutamate + ADP + phosphate + H(+). Catalyzes the cleavage of 5-oxoproline to form L-glutamate coupled to the hydrolysis of ATP to ADP and inorganic phosphate. The sequence is that of 5-oxoprolinase subunit A from Staphylococcus aureus (strain Mu3 / ATCC 700698).